Reading from the N-terminus, the 390-residue chain is DNA primase small subunit PriS (390 aa).

Active-site residues include aspartate 98, aspartate 100, and aspartate 296.

Belongs to the eukaryotic-type primase small subunit family. Heterodimer of a small subunit (PriS) and a large subunit (PriL). The cofactor is Mg(2+). Requires Mn(2+) as cofactor.

Functionally, catalytic subunit of DNA primase, an RNA polymerase that catalyzes the synthesis of short RNA molecules used as primers for DNA polymerase during DNA replication. The small subunit contains the primase catalytic core and has DNA synthesis activity on its own. Binding to the large subunit stabilizes and modulates the activity, increasing the rate of DNA synthesis while decreasing the length of the DNA fragments, and conferring RNA synthesis capability. The DNA polymerase activity may enable DNA primase to also catalyze primer extension after primer synthesis. May also play a role in DNA repair. In Methanococcoides burtonii (strain DSM 6242 / NBRC 107633 / OCM 468 / ACE-M), this protein is DNA primase small subunit PriS.